The chain runs to 460 residues: MQKLWEGRFSEASSALLEEFNASINFDKKLYKDDIEGSIAHSSMLANCGILSKDEVDKIKNGLNQILNEIESGNFEFKISDEDIHMAIEKRLAEIIGKNTAGRLHTARSRNDQVATDFRHFCMRENLAIAELLRTFVKALVEIAEKNIQTLMPGFTHLQHAQPISLAEHLLAYAFMFKRDFERFISSYERNNFSPLGSAALAGTPHMIDRFETAETLGFKAPMSNSMDGVSDRDFALEILFNISVVFTHTSRLCEELILWNSQEFGFITISDAFSTGSSIMPQKKNPDVAELIRGKTGRIYGNLISLLTTMKGLALAYNKDMQEDKECVFDSVKEVHTSVVILREMLKTAKFNEKNMLKACKKGHLTATDLADYLVREKNIPFRKAHFIVGKCVATAESLGLDLSEMSLENLQKIDGEIDENALKCLDLFNSKNSRKSYGGTADESVRVQIEILKKWLKK.

Belongs to the lyase 1 family. Argininosuccinate lyase subfamily.

Its subcellular location is the cytoplasm. The enzyme catalyses 2-(N(omega)-L-arginino)succinate = fumarate + L-arginine. Its pathway is amino-acid biosynthesis; L-arginine biosynthesis; L-arginine from L-ornithine and carbamoyl phosphate: step 3/3. This is Argininosuccinate lyase from Campylobacter hominis (strain ATCC BAA-381 / DSM 21671 / CCUG 45161 / LMG 19568 / NCTC 13146 / CH001A).